The chain runs to 807 residues: Spondin-1 (807 aa).

The N-terminal stretch at 1–28 (MRLSPVSLRLSRGPALLALALPLAAALA) is a signal peptide. A Reelin domain is found at 29-194 (FSDETLDKVT…DPTLDGVTDR (166 aa)). Disulfide bonds link cysteine 44-cysteine 128, cysteine 156-cysteine 182, cysteine 199-cysteine 336, cysteine 200-cysteine 340, cysteine 202-cysteine 415, cysteine 443-cysteine 480, cysteine 454-cysteine 489, cysteine 459-cysteine 494, cysteine 502-cysteine 538, cysteine 513-cysteine 517, cysteine 548-cysteine 554, cysteine 559-cysteine 595, cysteine 570-cysteine 574, cysteine 605-cysteine 610, cysteine 615-cysteine 650, cysteine 626-cysteine 630, and cysteine 660-cysteine 665. The region spanning 195 to 388 (PILDCCACGT…LTSLDHPQSP (194 aa)) is the Spondin domain. N-linked (GlcNAc...) asparagine glycosylation is present at asparagine 214. 3 residues coordinate Ca(2+): aspartate 325, aspartate 354, and aspartate 358. 5 consecutive TSP type-1 domains span residues 442-495 (TCIY…PGCS), 501-555 (TCTM…EECS), 558-611 (SCLV…PECH), 614-666 (PCLL…PECP), and 668-721 (DCEL…RKCL). Asparagine 681 is a glycosylation site (N-linked (GlcNAc...) asparagine). Over residues 732–746 (REARESRRSEQLREE) the composition is skewed to basic and acidic residues. The segment at 732–752 (REARESRRSEQLREESDGEQF) is disordered. In terms of domain architecture, TSP type-1 6 spans 754–806 (GCRMRPWTAWSECTKLCGGGIQERYMTVKKRFKSSQFTSCKDKKEIRACNVHP).

In terms of assembly, binds to the central extracellular domain of APP and inhibits beta-secretase cleavage of APP.

It is found in the secreted. It localises to the extracellular space. The protein localises to the extracellular matrix. Functionally, cell adhesion protein that promotes the attachment of spinal cord and sensory neuron cells and the outgrowth of neurites in vitro. May contribute to the growth and guidance of axons in both the spinal cord and the PNS. The chain is Spondin-1 (Spon1) from Mus musculus (Mouse).